The sequence spans 230 residues: Thioredoxin domain-containing protein PLP3B (230 aa).

A Thioredoxin domain is found at 89–173; that stretch reads VSEGDFLGEV…GIAMDRLVGF (85 aa). Residues 199–230 form a disordered region; it reads EKRKEEDEEDYEYQESIRRSVRSSANVDSDSD. Positions 220 to 230 are enriched in polar residues; that stretch reads RSSANVDSDSD.

Belongs to the phosducin family. In terms of assembly, interacts with TUBB2, TUBB3, TUBB4 and TUBB5. As to expression, expressed in roots, cotyledons, leaves, stems and flowers.

It localises to the cytoplasm. It is found in the nucleus. Its function is as follows. Tubulin-binding protein involved in microtubule formation. The protein is Thioredoxin domain-containing protein PLP3B (PLP3B) of Arabidopsis thaliana (Mouse-ear cress).